The primary structure comprises 183 residues: ATP-dependent protease subunit HslV (183 aa).

Residue threonine 10 is part of the active site. Na(+) is bound by residues alanine 164, cysteine 167, and threonine 170.

This sequence belongs to the peptidase T1B family. HslV subfamily. A double ring-shaped homohexamer of HslV is capped on each side by a ring-shaped HslU homohexamer. The assembly of the HslU/HslV complex is dependent on binding of ATP.

The protein localises to the cytoplasm. It carries out the reaction ATP-dependent cleavage of peptide bonds with broad specificity.. Allosterically activated by HslU binding. In terms of biological role, protease subunit of a proteasome-like degradation complex believed to be a general protein degrading machinery. The sequence is that of ATP-dependent protease subunit HslV from Rhizorhabdus wittichii (strain DSM 6014 / CCUG 31198 / JCM 15750 / NBRC 105917 / EY 4224 / RW1) (Sphingomonas wittichii).